Reading from the N-terminus, the 108-residue chain is Class I hydrophobin 3 (108 aa).

Positions 1–17 (MFFQTTIVAALAFLAVA) are cleaved as a signal peptide. Disulfide bonds link cysteine 28-cysteine 87, cysteine 35-cysteine 81, cysteine 36-cysteine 69, and cysteine 88-cysteine 101. Residue asparagine 37 is glycosylated (N-linked (GlcNAc...) asparagine).

Belongs to the fungal hydrophobin family. As to quaternary structure, self-assembles to form functional amyloid fibrils called rodlets. Self-assembly into fibrillar rodlets occurs spontaneously at hydrophobic:hydrophilic interfaces and the rodlets further associate laterally to form amphipathic monolayers.

The protein resides in the secreted. Its subcellular location is the cell wall. Aerial growth, conidiation, and dispersal of filamentous fungi in the environment rely upon a capability of their secreting small amphipathic proteins called hydrophobins (HPBs) with low sequence identity. Class I can self-assemble into an outermost layer of rodlet bundles on aerial cell surfaces, conferring cellular hydrophobicity that supports fungal growth, development and dispersal; whereas Class II form highly ordered films at water-air interfaces through intermolecular interactions but contribute nothing to the rodlet structure. Vmh3 is a class I hydrophobin that is essential for the maintenance of the surface hydrophobicity of the mycelium and might be involved in the development of fruiting bodies. Plays an important role in hyphal resistance against environmental stress. Necessary for the efficient biodegradation of lignin. In Pleurotus ostreatus (Oyster mushroom), this protein is Class I hydrophobin 3.